Here is a 209-residue protein sequence, read N- to C-terminus: Thymidine kinase (209 aa).

Residues 9 to 16 (SAMNAGKT) and 88 to 91 (DEAQ) each bind ATP. Glutamate 89 functions as the Proton acceptor in the catalytic mechanism.

This sequence belongs to the thymidine kinase family. Homotetramer.

It is found in the cytoplasm. The catalysed reaction is thymidine + ATP = dTMP + ADP + H(+). This chain is Thymidine kinase, found in Xanthomonas oryzae pv. oryzae (strain MAFF 311018).